Consider the following 270-residue polypeptide: tRNA pseudouridine synthase A (270 aa).

Asp60 (nucleophile) is an active-site residue. The RNA binding stretch occupies residues 107 to 111 (FHARF). Tyr118 is a substrate binding site. Positions 168 to 172 (QCQSR) are interaction with tRNA.

The protein belongs to the tRNA pseudouridine synthase TruA family. As to quaternary structure, homodimer.

It carries out the reaction uridine(38/39/40) in tRNA = pseudouridine(38/39/40) in tRNA. Formation of pseudouridine at positions 38, 39 and 40 in the anticodon stem and loop of transfer RNAs. The polypeptide is tRNA pseudouridine synthase A (Citrobacter koseri (strain ATCC BAA-895 / CDC 4225-83 / SGSC4696)).